The sequence spans 502 residues: Mannitol 2-dehydrogenase (502 aa).

Residue 37-48 participates in NAD(+) binding; the sequence is IVHIGVGGFHRA.

This sequence belongs to the mannitol dehydrogenase family. As to quaternary structure, monomer.

It carries out the reaction D-mannitol + NAD(+) = D-fructose + NADH + H(+). Catalyzes the NAD(H)-dependent interconversion of D-fructose and D-mannitol in the mannitol metabolic pathway. The sequence is that of Mannitol 2-dehydrogenase from Emericella nidulans (strain FGSC A4 / ATCC 38163 / CBS 112.46 / NRRL 194 / M139) (Aspergillus nidulans).